The sequence spans 1423 residues: MFAFLWKISLCLLVLGVITGDPQAVAAEEKQAKDASPTPQLGVWQFASPSLPPELRKLHGIVEAEQVNRHLLRRRKRSILFPSGVKICPDESVEQAIANHLKYFRLRVCQETVWEVFKTFWDRLPEREEYHTWMSLCEEGTMSIFEMGMNFSQSEEHRSLIVKKLSYTKEAMAGSCTDWSCGGTPTPASDADATTLRDAAANVPPPHEVSIESPPGGTSHEIEDADTTINNEIKKEDEIPVRPVTEQMIEFSIVIAGEKYSEELSDPDTAKYQLLSEQFVSQIQNVFEGLPGYKNIHVLEFSSPEEDSGVEVHYAVTFDGEAISNATWDLINLHSNKVEDNSFMGIEDNPTVVYTISDFQDYIAEILQKNALLENTSLTLDPNSLQLINVKEILHPTQEDPSWITEHPTVLEHVEFDDNTFSAERPSADESTVSNTLPFDFTKPDSTLDSEESDDNEIRPRPESLDSEVSLIPEAPLSSEADVTSLPDGLXLADWNQTPALVTAPVIEHDSLDSLEWLSAPDSSDEFEDTGLSDDFLLPSSPSSHLVPEEPPSTDDYTAPLLSAPTVASSSVIETDTKRTVTAEKEVVTQGSPADSSSADSLLHEXVEESPFPLEVHPVEGEXDIYLGDRMIFDDGSGSAFDGSGKGMEPSIWPWDVATLEPVFYPGPDSWLDDDNDSLPFRTEDIPEGLILDYILNSGNKLDDDPSKDENEGVASIKENFLDESEIFVFPETTTQQVPLLQTGEPSSVETSTQMETLSMDDDSFVKPSFVLEPPEDYSFADLPTGEDLFLPHSTGVSVEDTLLTSTVTLGXEDSLLTSTVAFSVEQPEESSVGQEIISEAXEHQNEDRPTVEELFTAGQSNVGEAATVGYLDKSSLETVLTAEPFEVSTDTSTEEQQSLDSSLADRDTGLAIRKPADVWPTDRVLEKTLDQTVQSAVPTAAQVSTAVPSLIHQATALEGFAGQDGTEHDTHVSMSISTILNSYVTITADTVELPSHLPPMTTTVSSSVVTLAKVGDETTRVLDVSVDLDHVSMVSFSPEPSEEAKSMTDSHMELTTHAHSTEMAGVAWPTHEIHNSTPVPSRALVVFFSLRVTNMMFSEDLFNKNSPEYKALEQRFLELLVPYLQSNLTGFQNLEILNFRNGSIVVNSRMKFAKPVPRNVTNAVYMILEDFCNTAYHTMNLAIDKYSLDVESGEQADPCKFQACNEFSECLVNRWSGEAECVCNPGYLSIDGLPCNSICDLQPNFCLNDGKCDISPGQGAICRCRVGENWWYRGEHCEEYVSEPLVVGIAIASVAGFLLVASAVIFFLARTLRDQYTKSDTEDSQGQGDSLSSIENAVKYNPMYESDTTGYSHYYRRYPQLTSYSSTSAETSTDYSSEEIRHIYENSELTKEEIQDRIRIIELYAKDRQFAEFVRQHQMKLL.

The first 27 residues, 1–27 (MFAFLWKISLCLLVLGVITGDPQAVAA), serve as a signal peptide directing secretion. Topologically, residues 28-1289 (EEKQAKDASP…EYVSEPLVVG (1262 aa)) are extracellular. Asn150 carries an N-linked (GlcNAc...) asparagine glycan. Residues 245-358 (TEQMIEFSIV…NPTVVYTISD (114 aa)) enclose the SEA 1 domain. Positions 265–273 (SDPDTAKYQ) are hyaluronan-binding motif involved in chondroitin sulfate A-binding. N-linked (GlcNAc...) asparagine glycosylation is found at Asn325 and Asn375. 3 disordered regions span residues 423–469 (AERP…DSEV), 522–559 (DSSD…DYTA), and 577–602 (TKRT…ADSL). Residues 523–532 (SSDEFEDTGL) show a composition bias toward acidic residues. Residues 537-546 (LLPSSPSSHL) are compositionally biased toward low complexity. Residues 577–587 (TKRTVTAEKEV) are compositionally biased toward basic and acidic residues. Asn676 carries N-linked (GlcNAc...) asparagine glycosylation. The interval 886 to 907 (FEVSTDTSTEEQQSLDSSLADR) is disordered. The segment covering 889 to 902 (STDTSTEEQQSLDS) has biased composition (polar residues). The region spanning 1083 to 1196 (RALVVFFSLR…YSLDVESGEQ (114 aa)) is the SEA 2 domain. Asn1128, Asn1142, and Asn1160 each carry an N-linked (GlcNAc...) asparagine glycan. 2 EGF-like domains span residues 1196–1234 (QADP…IDGL) and 1237–1279 (NSIC…EHCE). 5 disulfides stabilise this stretch: Cys1200–Cys1211, Cys1205–Cys1222, Cys1240–Cys1253, Cys1247–Cys1263, and Cys1265–Cys1278. Positions 1266-1274 (RVGENWWYR) are hyaluronan-binding motif involved in chondroitin sulfate C-binding. Residues 1290 to 1310 (IAIASVAGFLLVASAVIFFLA) form a helical membrane-spanning segment. Residues 1311-1423 (RTLRDQYTKS…FVRQHQMKLL (113 aa)) are Cytoplasmic-facing. The tract at residues 1322–1327 (TEDSQG) is hyaluronan-binding motif involved in chondroitin sulfate C-binding.

Highly glycosylated (N- and O-linked carbohydrates). In terms of tissue distribution, expressed in retina.

The protein localises to the photoreceptor outer segment membrane. The protein resides in the photoreceptor inner segment membrane. Its subcellular location is the secreted. It is found in the extracellular space. It localises to the extracellular matrix. The protein localises to the interphotoreceptor matrix. Its function is as follows. Chondroitin sulfate- and hyaluronan-binding proteoglycan involved in the organization of interphotoreceptor matrix. This chain is Interphotoreceptor matrix proteoglycan 2 (IMPG2), found in Gallus gallus (Chicken).